We begin with the raw amino-acid sequence, 20 residues long: Pregnancy-associated glycoprotein 73B (20 aa).

Belongs to the peptidase A1 family. N-glycosylated. Expressed in chorionic epithelium (trophectoderm).

Its subcellular location is the secreted. The protein resides in the extracellular space. The protein is Pregnancy-associated glycoprotein 73B of Bubalus bubalis (Domestic water buffalo).